The sequence spans 483 residues: Regulatory protein ViaA (483 aa).

This sequence belongs to the ViaA family. In terms of assembly, homodimer. Interacts with RavA.

It is found in the cytoplasm. Component of the RavA-ViaA chaperone complex, which may act on the membrane to optimize the function of some of the respiratory chains. ViaA stimulates the ATPase activity of RavA. The polypeptide is Regulatory protein ViaA (Cronobacter sakazakii (strain ATCC BAA-894) (Enterobacter sakazakii)).